Here is a 197-residue protein sequence, read N- to C-terminus: uncharacterized protein (197 aa).

This is an uncharacterized protein from Methanothermobacter thermautotrophicus (Methanobacterium thermoformicicum).